A 419-amino-acid polypeptide reads, in one-letter code: CinA-like protein (419 aa).

The protein belongs to the CinA family.

The polypeptide is CinA-like protein (Acaryochloris marina (strain MBIC 11017)).